A 396-amino-acid chain; its full sequence is Elongation factor Tu (396 aa).

The 195-residue stretch at 11 to 205 (KPHVNIGTIG…TVDEYIPTPE (195 aa)) folds into the tr-type G domain. The segment at 20–27 (GHVDHGKT) is G1. 20-27 (GHVDHGKT) serves as a coordination point for GTP. Thr-27 is a binding site for Mg(2+). The segment at 61 to 65 (GITIN) is G2. The interval 82–85 (DAPG) is G3. GTP is bound by residues 82–86 (DAPGH) and 137–140 (NKVD). A G4 region spans residues 137-140 (NKVD). Residues 175–177 (SAL) form a G5 region.

The protein belongs to the TRAFAC class translation factor GTPase superfamily. Classic translation factor GTPase family. EF-Tu/EF-1A subfamily. Monomer.

The protein resides in the cytoplasm. It catalyses the reaction GTP + H2O = GDP + phosphate + H(+). Functionally, GTP hydrolase that promotes the GTP-dependent binding of aminoacyl-tRNA to the A-site of ribosomes during protein biosynthesis. The polypeptide is Elongation factor Tu (Lactobacillus johnsonii (strain CNCM I-12250 / La1 / NCC 533)).